Consider the following 387-residue polypeptide: Protein BTN1 (387 aa).

The first 31 residues, 1–31, serve as a signal peptide directing secretion; that stretch reads MELDRDKKTFAYFWLFGLINNILYVVILSAA. Transmembrane regions (helical) follow at residues 43-63, 72-92, 93-113, 129-149, 151-171, 225-245, 257-276, 278-298, 308-328, and 347-367; these read IVLL…PFFV, IPIL…RSLW, LCLP…ITFL, SGTG…TTVF, LNIQ…LLYY, TVYL…LFPI, YVTY…TWGH, LPVK…LITL, SISW…SSYV, and LGSV…LGII.

This sequence belongs to the battenin family.

It is found in the vacuole membrane. In terms of biological role, involved in vacuolar transport and vacuole pH homeostasis. Also required for cytokinesis. In Kluyveromyces lactis (strain ATCC 8585 / CBS 2359 / DSM 70799 / NBRC 1267 / NRRL Y-1140 / WM37) (Yeast), this protein is Protein BTN1 (BTN1).